A 271-amino-acid chain; its full sequence is Glutamate racemase (271 aa).

Residues 12 to 13 (DS) and 44 to 45 (YG) each bind substrate. Catalysis depends on Cys-75, which acts as the Proton donor/acceptor. Residue 76–77 (NS) participates in substrate binding. Cys-185 functions as the Proton donor/acceptor in the catalytic mechanism. 186–187 (TH) contacts substrate.

It belongs to the aspartate/glutamate racemases family.

The catalysed reaction is L-glutamate = D-glutamate. Its pathway is cell wall biogenesis; peptidoglycan biosynthesis. Provides the (R)-glutamate required for cell wall biosynthesis. This is Glutamate racemase from Mycobacterium bovis (strain BCG / Pasteur 1173P2).